A 252-amino-acid chain; its full sequence is 1-(5-phosphoribosyl)-5-[(5-phosphoribosylamino)methylideneamino] imidazole-4-carboxamide isomerase (252 aa).

The active-site Proton acceptor is aspartate 8. Aspartate 129 serves as the catalytic Proton donor.

It belongs to the HisA/HisF family.

The protein localises to the cytoplasm. The catalysed reaction is 1-(5-phospho-beta-D-ribosyl)-5-[(5-phospho-beta-D-ribosylamino)methylideneamino]imidazole-4-carboxamide = 5-[(5-phospho-1-deoxy-D-ribulos-1-ylimino)methylamino]-1-(5-phospho-beta-D-ribosyl)imidazole-4-carboxamide. The protein operates within amino-acid biosynthesis; L-histidine biosynthesis; L-histidine from 5-phospho-alpha-D-ribose 1-diphosphate: step 4/9. This chain is 1-(5-phosphoribosyl)-5-[(5-phosphoribosylamino)methylideneamino] imidazole-4-carboxamide isomerase, found in Synechococcus sp. (strain RCC307).